The chain runs to 338 residues: Glycerol-3-phosphate dehydrogenase [NAD(P)+] (338 aa).

Positions 14, 15, 35, and 109 each coordinate NADPH. Sn-glycerol 3-phosphate is bound by residues Lys109, Gly138, and Thr140. Residue Ala142 participates in NADPH binding. Sn-glycerol 3-phosphate-binding residues include Lys194, Asp247, Ser257, Arg258, and Asn259. Catalysis depends on Lys194, which acts as the Proton acceptor. NADPH is bound at residue Arg258. NADPH-binding residues include Val282 and Glu284.

This sequence belongs to the NAD-dependent glycerol-3-phosphate dehydrogenase family.

It is found in the cytoplasm. The enzyme catalyses sn-glycerol 3-phosphate + NAD(+) = dihydroxyacetone phosphate + NADH + H(+). It catalyses the reaction sn-glycerol 3-phosphate + NADP(+) = dihydroxyacetone phosphate + NADPH + H(+). The protein operates within membrane lipid metabolism; glycerophospholipid metabolism. Functionally, catalyzes the reduction of the glycolytic intermediate dihydroxyacetone phosphate (DHAP) to sn-glycerol 3-phosphate (G3P), the key precursor for phospholipid synthesis. The chain is Glycerol-3-phosphate dehydrogenase [NAD(P)+] from Sodalis glossinidius (strain morsitans).